A 697-amino-acid chain; its full sequence is Phosphatase and actin regulator 4-B (697 aa).

One copy of the RPEL 1 repeat lies at 42–67 (EVLERKISMRKPREELVKRGLIVDVP). 2 disordered regions span residues 63-381 (IVDV…LTLA) and 450-569 (LKVP…SKDE). Residues 189–202 (HVPEKTSEKYRPKS) are compositionally biased toward basic and acidic residues. Composition is skewed to pro residues over residues 317–326 (PSPPLPPKRA) and 370–380 (APNPPVPPLTL). Acidic residues-rich tracts occupy residues 454-469 (DDDD…DESL), 501-514 (QEED…DTDS), and 522-532 (EEDEDEEEEET). 2 RPEL repeats span residues 579-604 (TQLN…QKNE) and 616-641 (RRLT…RFNE).

Belongs to the phosphatase and actin regulator family. As to quaternary structure, binds ppp1ca and actin.

The protein resides in the cytoplasm. It is found in the cell projection. It localises to the lamellipodium. Functionally, regulator of protein phosphatase 1 (PP1) required for neural tube and optic fissure closure, and enteric neural crest cell (ENCCs) migration during development. Acts as an activator of PP1. During neural tube closure, localizes to the ventral neural tube and activates PP1, leading to down-regulate cell proliferation within cranial neural tissue and the neural retina. Also acts as a regulator of migration of enteric neural crest cells (ENCCs) by activating PP1, leading to repression of the integrin signaling through the rho/rock pathway. The chain is Phosphatase and actin regulator 4-B (phactr4-b) from Xenopus laevis (African clawed frog).